Here is a 159-residue protein sequence, read N- to C-terminus: Nucleotide-binding protein Psyr_4087 (159 aa).

It belongs to the YajQ family.

Nucleotide-binding protein. In Pseudomonas syringae pv. syringae (strain B728a), this protein is Nucleotide-binding protein Psyr_4087.